The chain runs to 221 residues: Protein-L-isoaspartate O-methyltransferase (221 aa).

Ser-60 is a catalytic residue.

This sequence belongs to the methyltransferase superfamily. L-isoaspartyl/D-aspartyl protein methyltransferase family.

It is found in the cytoplasm. The catalysed reaction is [protein]-L-isoaspartate + S-adenosyl-L-methionine = [protein]-L-isoaspartate alpha-methyl ester + S-adenosyl-L-homocysteine. In terms of biological role, catalyzes the methyl esterification of L-isoaspartyl residues in peptides and proteins that result from spontaneous decomposition of normal L-aspartyl and L-asparaginyl residues. It plays a role in the repair and/or degradation of damaged proteins. The chain is Protein-L-isoaspartate O-methyltransferase from Rhodospirillum centenum (strain ATCC 51521 / SW).